The following is a 334-amino-acid chain: N-acetyl-gamma-glutamyl-phosphate reductase (334 aa).

Cys154 is a catalytic residue.

This sequence belongs to the NAGSA dehydrogenase family. Type 1 subfamily.

It is found in the cytoplasm. The catalysed reaction is N-acetyl-L-glutamate 5-semialdehyde + phosphate + NADP(+) = N-acetyl-L-glutamyl 5-phosphate + NADPH + H(+). The protein operates within amino-acid biosynthesis; L-arginine biosynthesis; N(2)-acetyl-L-ornithine from L-glutamate: step 3/4. Catalyzes the NADPH-dependent reduction of N-acetyl-5-glutamyl phosphate to yield N-acetyl-L-glutamate 5-semialdehyde. The polypeptide is N-acetyl-gamma-glutamyl-phosphate reductase (Photorhabdus laumondii subsp. laumondii (strain DSM 15139 / CIP 105565 / TT01) (Photorhabdus luminescens subsp. laumondii)).